A 1021-amino-acid polypeptide reads, in one-letter code: MVIANLVFSASGTSLASVSRELYCTLFGPAPDELKHEFYVSVQLPSYSRHAKTYVVQSTLNETLEGQVVQLPSKIEDVPLDTPLIDLCKVEAVRERPPVLESVTIEVHGSLYEELTKLSEEDQLRFLQIRGDLRDCGTVVRAGQKLFVPWCQILDCVPYYQGLIDLQRTRILLLKGTDAMESCHLRKGLEDLKLRPNEGPTKELRIMLRCLEQPIERALLVPAADTDDDDSLFVFASAAVLLRLGVTSGARVTLSDGATSRIAKVFVLLSPNHFDSDAIYATPRLVVNFAEADKVVVSKYEGEMAELPVASSVSISRVGSWENSQMVYQKIILNNLTNFITAKQRIFYKDDLVPVTFDSDFSAMFSDQLNEFSVDYHDDSLVWFKIDTVKLNDDIPCEGAFRIDSKVTKLVTCNVSSSPPPPLSKCDYVSYYGLEPCFGYDRRVFDYAKRFHDIITTSRKCFQHGMNVGTTVMLHSSSVSVGKTTLVRSTCRELGIHLIEIDLLQLDPHMNSSNSTVNIVALIRAKIENVLPHTAPSVVYLAHLEGVLEKEDQISDPASLKAAKSMGIELAKLFTDYTELYPGTVFVCSTDALDVVPEAIRSKTKFEIEVPVPTETQRVEIFSWYLSPDVLNFNASQQFAMDHDVTISRLALQSAGLTPIDIRSIVESAKVCCYQRSKEKQHMLWQGGYRYINSADLSAAINKARDEFSDSIGAPKIPNVFWEDIGGLEMVKGEILDTIDMPLKFPELFASGMKKRSGILFYGPPGTGKTLLAKAVATNFSLNFFSVKGPELLNMYIGESEANVRRVFQRARDAKPCVIFFDELDSVAPKRGNQGDSGGVMDRIVSQLLAELDGLSTGGDGLFVIGATNRPDLLDEALLRPGRFDKLLYLGISDTNEKQANILRALTRKFTLDPDVSLDDLAASCPFTYTGADFYALCSDAMLNAMTRIAGNVDEKVASYNRAHNKNYSVRQWFDVIATAEDTSITVCMQDFVKAQRELVPSVSEGELNHYLAIRDNFESS.

763–770 (GPPGTGKT) is an ATP binding site.

It belongs to the AAA ATPase family. In terms of assembly, interacts with PEX1; forming the PEX1-PEX6 AAA ATPase complex, which is composed of a heterohexamer formed by a trimer of PEX1-PEX6 dimers.

It localises to the cytoplasm. It is found in the cytosol. Its subcellular location is the peroxisome membrane. The enzyme catalyses ATP + H2O = ADP + phosphate + H(+). Component of the PEX1-PEX6 AAA ATPase complex, a protein dislocase complex that mediates the ATP-dependent extraction of the PEX5 receptor from peroxisomal membranes, an essential step for PEX5 recycling. Specifically recognizes PEX5 monoubiquitinated at 'Cys-6', and pulls it out of the peroxisome lumen through the PEX2-PEX10-PEX12 retrotranslocation channel. Extraction by the PEX1-PEX6 AAA ATPase complex is accompanied by unfolding of the TPR repeats and release of bound cargo from PEX5. The protein is Peroxisomal ATPase PEX6 (PEX6) of Eremothecium gossypii (strain ATCC 10895 / CBS 109.51 / FGSC 9923 / NRRL Y-1056) (Yeast).